Reading from the N-terminus, the 337-residue chain is Monoacylglycerol lipase abhd6-B (337 aa).

The Extracellular portion of the chain corresponds to methionine 1–proline 19. A helical; Signal-anchor for type II membrane protein membrane pass occupies residues leucine 20–tryptophan 42. Residues arginine 43 to aspartate 337 lie on the Cytoplasmic side of the membrane. Residues proline 72–proline 313 enclose the AB hydrolase-1 domain. The Nucleophile role is filled by serine 148. Catalysis depends on charge relay system residues aspartate 278 and histidine 306.

This sequence belongs to the AB hydrolase superfamily.

Its subcellular location is the late endosome membrane. It is found in the lysosome membrane. The protein resides in the mitochondrion membrane. It carries out the reaction Hydrolyzes glycerol monoesters of long-chain fatty acids.. The enzyme catalyses 1-octanoylglycerol + H2O = octanoate + glycerol + H(+). The catalysed reaction is 1-decanoylglycerol + H2O = decanoate + glycerol + H(+). It catalyses the reaction 1-dodecanoylglycerol + H2O = dodecanoate + glycerol + H(+). It carries out the reaction 1-tetradecanoylglycerol + H2O = tetradecanoate + glycerol + H(+). The enzyme catalyses 2-hexadecanoylglycerol + H2O = glycerol + hexadecanoate + H(+). The catalysed reaction is 2-(9Z-octadecenoyl)-glycerol + H2O = glycerol + (9Z)-octadecenoate + H(+). It catalyses the reaction 1-(9Z-octadecenoyl)-glycerol + H2O = glycerol + (9Z)-octadecenoate + H(+). It carries out the reaction 2-(9Z,12Z-octadecadienoyl)-glycerol + H2O = (9Z,12Z)-octadecadienoate + glycerol + H(+). The enzyme catalyses 2-(5Z,8Z,11Z,14Z-eicosatetraenoyl)-glycerol + H2O = glycerol + (5Z,8Z,11Z,14Z)-eicosatetraenoate + H(+). The catalysed reaction is 1-(5Z,8Z,11Z,14Z-eicosatetraenoyl)-glycerol + H2O = glycerol + (5Z,8Z,11Z,14Z)-eicosatetraenoate + H(+). It catalyses the reaction 1-(9Z,12Z-octadecadienoyl)-glycerol + H2O = (9Z,12Z)-octadecadienoate + glycerol + H(+). It carries out the reaction 3-(9Z-octadecenoyl)-sn-glycero-1-phospho-(3'-(9Z-octadecenoyl)-1'-sn-glycerol) + H2O = 3-(9Z-octadecenoyl)-sn-glycero-1-phospho-(1'-sn-glycerol) + (9Z)-octadecenoate + H(+). The enzyme catalyses (S,S)-2-(9Z-octadecenoyl)-sn-glycero-1-phospho-(2'-(9Z-octadecenoyl)-1'-sn-glycerol) + H2O = (S,S)-2-(9Z-octadecenoyl)-sn-glycero-1-phospho-(1'-sn-glycerol) + (9Z)-octadecenoate + H(+). The catalysed reaction is (R,R)-2-(9Z-octadecenoyl)-sn-glycero-3-phospho-(2'-(9Z-octadecenoyl)-3'-sn-glycerol) + H2O = (R,R)-2-(9Z-octadecenoyl)-sn-glycero-3-phospho-(3'-sn-glycerol) + (9Z)-octadecenoate + H(+). Lipase that preferentially hydrolysis medium-chain saturated monoacylglycerols including 2-arachidonoylglycerol. Through 2-arachidonoylglycerol degradation may regulate endocannabinoid signaling pathways. Also has a lysophosphatidyl lipase activity with a preference for lysophosphatidylglycerol among other lysophospholipids. Also able to degrade bis(monoacylglycero)phosphate (BMP) and constitutes the major enzyme for BMP catabolism. BMP, also known as lysobisphosphatidic acid, is enriched in late endosomes and lysosomes and plays a key role in the formation of intraluminal vesicles and in lipid sorting. The polypeptide is Monoacylglycerol lipase abhd6-B (abhd6-b) (Xenopus laevis (African clawed frog)).